The following is a 612-amino-acid chain: Threonine--tRNA ligase (612 aa).

Residues 218 to 509 (DHRKLGVELG…LSEHFGGNFP (292 aa)) form a catalytic region. 3 residues coordinate Zn(2+): C310, H361, and H486.

It belongs to the class-II aminoacyl-tRNA synthetase family. As to quaternary structure, homodimer. The cofactor is Zn(2+).

It is found in the cytoplasm. The catalysed reaction is tRNA(Thr) + L-threonine + ATP = L-threonyl-tRNA(Thr) + AMP + diphosphate + H(+). Functionally, catalyzes the attachment of threonine to tRNA(Thr) in a two-step reaction: L-threonine is first activated by ATP to form Thr-AMP and then transferred to the acceptor end of tRNA(Thr). Also edits incorrectly charged L-seryl-tRNA(Thr). This Helicobacter pylori (strain G27) protein is Threonine--tRNA ligase.